The following is a 205-amino-acid chain: Glycerol-3-phosphate acyltransferase (205 aa).

The next 6 helical transmembrane spans lie at 7 to 27 (MTALVLAGYLSGSLLGAVWVC), 54 to 74 (VVPAALTLGVDAAKAMPVLWV), 80 to 100 (LPIWAQGAVGLSVLVGHSYPL), 116 to 136 (VLLMIATPVAWVCALCWALLA), 141 to 161 (TAAVASLAAALLAPLASYWLA), and 163 to 183 (EATLVVSVFSALVLVRHAWNI).

This sequence belongs to the PlsY family. As to quaternary structure, probably interacts with PlsX.

It localises to the cell inner membrane. The catalysed reaction is an acyl phosphate + sn-glycerol 3-phosphate = a 1-acyl-sn-glycero-3-phosphate + phosphate. It participates in lipid metabolism; phospholipid metabolism. Functionally, catalyzes the transfer of an acyl group from acyl-phosphate (acyl-PO(4)) to glycerol-3-phosphate (G3P) to form lysophosphatidic acid (LPA). This enzyme utilizes acyl-phosphate as fatty acyl donor, but not acyl-CoA or acyl-ACP. The polypeptide is Glycerol-3-phosphate acyltransferase (Chromohalobacter salexigens (strain ATCC BAA-138 / DSM 3043 / CIP 106854 / NCIMB 13768 / 1H11)).